Reading from the N-terminus, the 196-residue chain is Shikimate kinase (196 aa).

ATP is bound at residue 32–37; sequence GAGKSA. Residue Ser-36 participates in Mg(2+) binding. Substrate is bound by residues Asp-54, Arg-78, and Gly-100. Arg-138 contributes to the ATP binding site. Arg-157 is a substrate binding site. Position 174 (Arg-174) interacts with ATP.

Belongs to the shikimate kinase family. Monomer. Mg(2+) is required as a cofactor.

The protein localises to the cytoplasm. It carries out the reaction shikimate + ATP = 3-phosphoshikimate + ADP + H(+). The protein operates within metabolic intermediate biosynthesis; chorismate biosynthesis; chorismate from D-erythrose 4-phosphate and phosphoenolpyruvate: step 5/7. Its function is as follows. Catalyzes the specific phosphorylation of the 3-hydroxyl group of shikimic acid using ATP as a cosubstrate. This Rhizobium leguminosarum bv. trifolii (strain WSM2304) protein is Shikimate kinase.